Here is a 364-residue protein sequence, read N- to C-terminus: MHFFQSSLVAATMGAALVAAAPAADLETRGSCTFTSTSALKSGKASCSTITLQNIAVPAGETLDLTGLKAGTTVVFDGTTTFGYKEWEGPLISASGTSITIKQNPGAKIDCDGARWWDGKGGNGGKKKPKFFSAHKLNKSNITGLKVYNTPVHGFSIQSDHLTIKDVLLDNSAGTKLGHNTDAFDVGSSTYITIDGATVYNQDDCLAVNSGEHITFTNGYCNGGHGLSIGSVGGRSNNVVNDVTISNSQVINSQNGARIKTVYGATGSVTGVKFQDISLKGITKYGIVVQQDYENGKPTGKPTNGVKVSDITFEKVTGTVTSSATDIYILCGSGSCTNWTWSGNSVTGGKKSSSCKNVPAGASC.

Residues 1 to 20 form the signal peptide; it reads MHFFQSSLVAATMGAALVAA. A propeptide spanning residues 21-29 is cleaved from the precursor; that stretch reads APAADLETR. The cysteines at positions 32 and 47 are disulfide-linked. 2 N-linked (GlcNAc...) asparagine glycosylation sites follow: N138 and N141. PbH1 repeat units follow at residues 159-188, 189-210, 211-231, 240-261, 269-291, and 303-324; these read SDHL…DVGS, STYI…AVNS, GEHI…SIGS, VNDV…RIKT, VTGV…VVQQ, and TNGV…TSSA. The active-site Proton donor is D203. A disulfide bridge links C205 with C221. H225 is an active-site residue. An intrachain disulfide couples C331 to C336. N338 is a glycosylation site (N-linked (GlcNAc...) asparagine). An intrachain disulfide couples C355 to C364.

Belongs to the glycosyl hydrolase 28 family.

Its subcellular location is the secreted. The enzyme catalyses (1,4-alpha-D-galacturonosyl)n+m + H2O = (1,4-alpha-D-galacturonosyl)n + (1,4-alpha-D-galacturonosyl)m.. Its function is as follows. Involved in maceration and soft-rotting of plant tissue. Hydrolyzes the 1,4-alpha glycosidic bonds of de-esterified pectate in the smooth region of the plant cell wall. This is Probable endopolygalacturonase B (pgaB) from Aspergillus fumigatus (strain CBS 144.89 / FGSC A1163 / CEA10) (Neosartorya fumigata).